The sequence spans 357 residues: Holliday junction branch migration complex subunit RuvB (357 aa).

A disordered region spans residues 1–27 (MGRFDDAGAQDAEPDDRDVSPALTVGE). The large ATPase domain (RuvB-L) stretch occupies residues 1-195 (MGRFDDAGAQ…FGFTAHMDFY (195 aa)). ATP-binding positions include leucine 34, arginine 35, glycine 76, lysine 79, threonine 80, serine 81, 142-144 (EDF), arginine 185, tyrosine 195, and arginine 232. Threonine 80 lines the Mg(2+) pocket. Residues 196-266 (EPAELERVLA…IAKAALEVYD (71 aa)) are small ATPAse domain (RuvB-S). The interval 269-357 (ELGLDRLDRA…TGLGQTGLFD (89 aa)) is head domain (RuvB-H). The DNA site is built by arginine 324 and arginine 329.

It belongs to the RuvB family. Homohexamer. Forms an RuvA(8)-RuvB(12)-Holliday junction (HJ) complex. HJ DNA is sandwiched between 2 RuvA tetramers; dsDNA enters through RuvA and exits via RuvB. An RuvB hexamer assembles on each DNA strand where it exits the tetramer. Each RuvB hexamer is contacted by two RuvA subunits (via domain III) on 2 adjacent RuvB subunits; this complex drives branch migration. In the full resolvosome a probable DNA-RuvA(4)-RuvB(12)-RuvC(2) complex forms which resolves the HJ.

It is found in the cytoplasm. The enzyme catalyses ATP + H2O = ADP + phosphate + H(+). Its function is as follows. The RuvA-RuvB-RuvC complex processes Holliday junction (HJ) DNA during genetic recombination and DNA repair, while the RuvA-RuvB complex plays an important role in the rescue of blocked DNA replication forks via replication fork reversal (RFR). RuvA specifically binds to HJ cruciform DNA, conferring on it an open structure. The RuvB hexamer acts as an ATP-dependent pump, pulling dsDNA into and through the RuvAB complex. RuvB forms 2 homohexamers on either side of HJ DNA bound by 1 or 2 RuvA tetramers; 4 subunits per hexamer contact DNA at a time. Coordinated motions by a converter formed by DNA-disengaged RuvB subunits stimulates ATP hydrolysis and nucleotide exchange. Immobilization of the converter enables RuvB to convert the ATP-contained energy into a lever motion, pulling 2 nucleotides of DNA out of the RuvA tetramer per ATP hydrolyzed, thus driving DNA branch migration. The RuvB motors rotate together with the DNA substrate, which together with the progressing nucleotide cycle form the mechanistic basis for DNA recombination by continuous HJ branch migration. Branch migration allows RuvC to scan DNA until it finds its consensus sequence, where it cleaves and resolves cruciform DNA. The protein is Holliday junction branch migration complex subunit RuvB of Mycobacterium sp. (strain JLS).